The chain runs to 285 residues: Iron uptake system component EfeM (285 aa).

The signal sequence occupies residues 1 to 34 (MTYPLLTRKTLMKKTPLALLLTLGLLQTPLAAFA).

It belongs to the EfeM/EfeO family. In terms of assembly, component of the iron transporter efeUOB/M complex composed of EfeU, EfeM and EfeB.

The protein localises to the periplasm. In terms of biological role, part of the iron transporter system efeUOB/M involved in iron import. Specifically binds Fe(3+), which is produced by EfeB-mediated oxidation of Fe(2+), and delivers it to the cell inner membrane permease EfeU. Also binds Zn(2+) and Cu(2+) in vitro. The polypeptide is Iron uptake system component EfeM (Pseudomonas syringae pv. syringae (strain B728a)).